We begin with the raw amino-acid sequence, 364 residues long: Probable 7-methylxanthine methyltransferase 5 (364 aa).

Residue tyrosine 19 participates in S-adenosyl-L-homocysteine binding. A theobromine-binding site is contributed by threonine 26. Residues cysteine 64, glutamine 69, aspartate 101, leucine 102, serine 134, and phenylalanine 135 each coordinate S-adenosyl-L-homocysteine. Positions 152, 155, and 156 each coordinate theobromine. Positions 172, 258, 260, and 261 each coordinate Mg(2+). Phenylalanine 314 is a binding site for theobromine.

The protein belongs to the methyltransferase superfamily. Type-7 methyltransferase family. The cofactor is Mg(2+).

It catalyses the reaction 7-methylxanthine + S-adenosyl-L-methionine = theobromine + S-adenosyl-L-homocysteine + H(+). Its pathway is alkaloid biosynthesis. Functionally, involved in the biosynthesis of theobromine. The sequence is that of Probable 7-methylxanthine methyltransferase 5 from Theobroma cacao (Cacao).